The sequence spans 529 residues: Zinc metalloproteinase MspA (529 aa).

Residues 1-24 form the signal peptide; it reads MHHNYYLSPLAVALALGMVSPAKA. Positions 25 to 204 are excised as a propeptide; the sequence is ADPILLQNAS…PFVQWNDIKT (180 aa). His365 lines the Zn(2+) pocket. Glu366 is an active-site residue. Residues His369 and Glu389 each coordinate Zn(2+). Residue His451 is the Proton donor of the active site.

The protein belongs to the peptidase M4 family. Zn(2+) is required as a cofactor.

In Legionella longbeachae, this protein is Zinc metalloproteinase MspA (mspA).